Consider the following 170-residue polypeptide: Adenine phosphoribosyltransferase (170 aa).

Belongs to the purine/pyrimidine phosphoribosyltransferase family. In terms of assembly, homodimer.

The protein localises to the cytoplasm. It catalyses the reaction AMP + diphosphate = 5-phospho-alpha-D-ribose 1-diphosphate + adenine. It participates in purine metabolism; AMP biosynthesis via salvage pathway; AMP from adenine: step 1/1. In terms of biological role, catalyzes a salvage reaction resulting in the formation of AMP, that is energically less costly than de novo synthesis. This Thermotoga petrophila (strain ATCC BAA-488 / DSM 13995 / JCM 10881 / RKU-1) protein is Adenine phosphoribosyltransferase.